A 2150-amino-acid chain; its full sequence is A disintegrin and metalloproteinase with thrombospondin motifs gon-1 (2150 aa).

Positions 1–28 (MRSIGGSFHLLQPVVAALILLVVCLVYA) are cleaved as a signal peptide. The propeptide occupies 29-273 (LQSGSGTISE…VIERKARSRR (245 aa)). 4 N-linked (GlcNAc...) asparagine glycosylation sites follow: asparagine 134, asparagine 213, asparagine 243, and asparagine 248. A Peptidase M12B domain is found at 280 to 493 (HYVEVLVVAD…GQTQCLFDQP (214 aa)). Disulfide bonds link cysteine 402-cysteine 488 and cysteine 440-cysteine 470. Histidine 424 lines the Zn(2+) pocket. Glutamate 425 is an active-site residue. The Zn(2+) site is built by histidine 428 and histidine 434. The region spanning 503-587 (FVRDEPGKKY…RLAPESLTKI (85 aa)) is the Disintegrin domain. A TSP type-1 1 domain is found at 588–643 (DGQWGDWRSWGECSRTCGGGVQKGLRDCDSPKPRNGGKYCVGQRERYRSCNTQECP). Disulfide bonds link cysteine 600-cysteine 637, cysteine 604-cysteine 642, and cysteine 615-cysteine 627. An N-linked (GlcNAc...) asparagine glycan is attached at asparagine 842. TSP type-1 domains follow at residues 943–1003 (CSTR…IDCS), 1004–1057 (GRKW…RECN), 1060–1115 (PCPR…HACT), 1116–1165 (WWQF…KPCH), 1168–1227 (SCPK…GTCP), 1228–1277 (FWRN…QTCH), 1280–1339 (PCTS…DTCD), 1352–1409 (PPIR…RDCS), 1410–1469 (YWKM…EPCP), 1474–1524 (HIGS…ELCP), and 1527–1585 (TNNS…PPCR). N-linked (GlcNAc...) asparagine glycans are attached at residues asparagine 1139 and asparagine 1199. 2 N-linked (GlcNAc...) asparagine glycosylation sites follow: asparagine 1370 and asparagine 1432. 4 N-linked (GlcNAc...) asparagine glycosylation sites follow: asparagine 1528, asparagine 1590, asparagine 1606, and asparagine 1654. The tract at residues 1590–1614 (NKTSSASMTSLSSSNSNTTSSASAS) is disordered. A compositionally biased stretch (low complexity) spans 1592–1614 (TSSASMTSLSSSNSNTTSSASAS). TSP type-1 domains follow at residues 1621–1675 (PVVS…VRCR), 1678–1736 (HCPR…VACP), 1737–1793 (AYRW…DTSN), 1794–1866 (CPYE…NPCD), and 1867–1924 (SEFK…RNCL). Cystine bridges form between cysteine 1679/cysteine 1718, cysteine 1690/cysteine 1694, cysteine 1690/cysteine 1730, cysteine 1694/cysteine 1735, cysteine 1705/cysteine 1718, and cysteine 1730/cysteine 1735. N-linked (GlcNAc...) asparagine glycosylation is found at asparagine 1828 and asparagine 1855. A GON domain is found at 1924-2123 (LPSTCQELKS…RYKGLIFEVN (200 aa)). 3 N-linked (GlcNAc...) asparagine glycosylation sites follow: asparagine 1942, asparagine 1960, and asparagine 1997.

It depends on Zn(2+) as a cofactor. In terms of tissue distribution, expressed by the gonadal distal tip cells (DTCs). Expressed in muscles, including body wall, vulval and anal depressor muscles. Expressed in motor neurons and in ASI and ASJ neurons.

It localises to the secreted. Its subcellular location is the extracellular space. The protein localises to the extracellular matrix. It is found in the basement membrane. The protein resides in the endoplasmic reticulum. It localises to the golgi apparatus. Functionally, secreted metalloprotease required for distal tip cell (DTC) migration along the body wall basement membranes, a key step that promotes gonad morphogenesis. Probably acts by remodeling the basement membrane during cell migration. Required to restrict presynaptic growth at the neuromuscular junctions (NMJ) in late larval stage and in adult motor neurons, probably by controlling collagen IV emb-9 degradation, a component of the synapse basement membrane. Also involved in the organization of adult muscle morphology. Has a protease-independent function in promoting the transport from the endoplasmic reticulum to the Golgi apparatus of a variety of secretory cargos. Required for the secretion of insulin-like peptide ins-7, daf-28 and ins-18 and TGF beta-like protein daf-7. In peripheral tissues, negatively regulates insulin-mediated daf-16 translocation and thereby negatively regulates lifespan and dauer formation. The polypeptide is A disintegrin and metalloproteinase with thrombospondin motifs gon-1 (Caenorhabditis elegans).